Reading from the N-terminus, the 690-residue chain is MGTVSSRRSWWPLPLLLLLLLGPAGARAQEDEDGDYEELVLALRSEEDGLAEAPEHGTTATFHRCAKDPWRLPGTYVVVLKEETHLSQSERTARRLQAQAARRGYLTKILHVFHGLLPGFLVKMSGDLLELALKLPHVDYIEEDSSVFAQSIPWNLERITPPRYRADEYQPPDGGSLVEVYLLDTSIQSDHREIEGRVMVTDFENVPEEDGTRFHRQASKCDSHGTHLAGVVSGRDAGVAKGASMRSLRVLNCQGKGTVSGTLIGLEFIRKSQLVQPVGPLVVLLPLAGGYSRVLNAACQRLARAGVVLVTAAGNFRDDACLYSPASAPEVITVGATNAQDQPVTLGTLGTNFGRCVDLFAPGEDIIGASSDCSTCFVSQSGTSQAAAHVAGIAAMMLSAEPELTLAELRQRLIHFSAKDVINEAWFPEDQRVLTPNLVAALPPSTHGAGWQLFCRTVWSAHSGPTRMATAVARCAPDEELLSCSSFSRSGKRRGEHMEAQGGKLVCRAHNAFGGEGVYAIARCCLLPQANCSVHTAPPAEAGMGTRVHCHQQGHVLTGCSSHWEVEDLGTHKPPVLRPRGQPNQCVGHREASIHASCCHAPGLECKVKEHGIPAPQEQVTVACEEGWTLTGCSALPGTSHVLGAYGIDNTCVVRSRDVSTTGRTSEEALAAVAICCRSRHLVQASQELQ.

A signal peptide spans methionine 1–alanine 28. Residues glutamine 29–glutamine 150 constitute a propeptide that is removed on maturation. A Sulfotyrosine modification is found at tyrosine 36. Serine 45 carries the phosphoserine modification. The 73-residue stretch at threonine 75–valine 147 folds into the Inhibitor I9 domain. The Peptidase S8 domain occupies proline 153–tryptophan 459. Active-site charge relay system residues include aspartate 184 and histidine 224. Intrachain disulfides connect cysteine 221–cysteine 253 and cysteine 321–cysteine 356. Serine 384 acts as the Charge relay system in catalysis. Residues glycine 448–glutamine 690 are C-terminal domain. 3 cysteine pairs are disulfide-bonded: cysteine 455–cysteine 525, cysteine 475–cysteine 524, and cysteine 484–cysteine 507. The N-linked (GlcNAc...) asparagine glycan is linked to asparagine 531. Cystine bridges form between cysteine 532/cysteine 599, cysteine 550/cysteine 598, cysteine 560/cysteine 586, cysteine 606/cysteine 677, cysteine 624/cysteine 676, and cysteine 633/cysteine 652. The residue at position 686 (serine 686) is a Phosphoserine.

Belongs to the peptidase S8 family. As to quaternary structure, monomer. Can self-associate to form dimers and higher multimers which may have increased LDLR degrading activity. The precursor protein but not the mature protein may form multimers. Interacts with APOB, VLDLR, LRP8/APOER2 and BACE1. The full-length immature form (pro-PCSK9) interacts with SCNN1A, SCNN1B and SCNN1G. The pro-PCSK9 form (via C-terminal domain) interacts with LDLR. Interacts (via the C-terminal domain) with ANXA2 (via repeat Annexin 1); the interaction inhibits the degradation of LDLR. It depends on Ca(2+) as a cofactor. In terms of processing, cleavage by furin and PCSK5 generates a truncated inactive protein that is unable to induce LDLR degradation. Undergoes autocatalytic cleavage in the endoplasmic reticulum to release the propeptide from the N-terminus and the cleavage of the propeptide is strictly required for its maturation and activation. The cleaved propeptide however remains associated with the catalytic domain through non-covalent interactions, preventing potential substrates from accessing its active site. As a result, it is secreted from cells as a propeptide-containing, enzymatically inactive protein. Post-translationally, phosphorylation protects the propeptide against proteolysis.

It localises to the cytoplasm. The protein localises to the secreted. It is found in the endosome. The protein resides in the lysosome. Its subcellular location is the cell surface. It localises to the endoplasmic reticulum. The protein localises to the golgi apparatus. With respect to regulation, its proteolytic activity is autoinhibited by the non-covalent binding of the propeptide to the catalytic domain. Inhibited by EGTA. Its function is as follows. Crucial player in the regulation of plasma cholesterol homeostasis. Binds to low-density lipid receptor family members: low density lipoprotein receptor (LDLR), very low density lipoprotein receptor (VLDLR), apolipoprotein E receptor (LRP1/APOER) and apolipoprotein receptor 2 (LRP8/APOER2), and promotes their degradation in intracellular acidic compartments. Acts via a non-proteolytic mechanism to enhance the degradation of the hepatic LDLR through a clathrin LDLRAP1/ARH-mediated pathway. May prevent the recycling of LDLR from endosomes to the cell surface or direct it to lysosomes for degradation. Can induce ubiquitination of LDLR leading to its subsequent degradation. Inhibits intracellular degradation of APOB via the autophagosome/lysosome pathway in a LDLR-independent manner. Involved in the disposal of non-acetylated intermediates of BACE1 in the early secretory pathway. Inhibits epithelial Na(+) channel (ENaC)-mediated Na(+) absorption by reducing ENaC surface expression primarily by increasing its proteasomal degradation. Regulates neuronal apoptosis via modulation of LRP8/APOER2 levels and related anti-apoptotic signaling pathways. This chain is Proprotein convertase subtilisin/kexin type 9 (PCSK9), found in Gorilla gorilla gorilla (Western lowland gorilla).